The primary structure comprises 418 residues: Gamma-glutamyl phosphate reductase (418 aa).

Belongs to the gamma-glutamyl phosphate reductase family.

The protein localises to the cytoplasm. It catalyses the reaction L-glutamate 5-semialdehyde + phosphate + NADP(+) = L-glutamyl 5-phosphate + NADPH + H(+). It functions in the pathway amino-acid biosynthesis; L-proline biosynthesis; L-glutamate 5-semialdehyde from L-glutamate: step 2/2. Functionally, catalyzes the NADPH-dependent reduction of L-glutamate 5-phosphate into L-glutamate 5-semialdehyde and phosphate. The product spontaneously undergoes cyclization to form 1-pyrroline-5-carboxylate. The protein is Gamma-glutamyl phosphate reductase of Desulfosudis oleivorans (strain DSM 6200 / JCM 39069 / Hxd3) (Desulfococcus oleovorans).